The chain runs to 398 residues: Phosphoglycerate kinase (398 aa).

Residues 21 to 23 (DIN), Arg-36, 59 to 62 (HFGR), Arg-118, and Arg-151 each bind substrate. ATP is bound by residues Lys-201, Glu-323, and 353-356 (GGDT).

The protein belongs to the phosphoglycerate kinase family. In terms of assembly, monomer.

The protein localises to the cytoplasm. It carries out the reaction (2R)-3-phosphoglycerate + ATP = (2R)-3-phospho-glyceroyl phosphate + ADP. It functions in the pathway carbohydrate degradation; glycolysis; pyruvate from D-glyceraldehyde 3-phosphate: step 2/5. In Ruegeria pomeroyi (strain ATCC 700808 / DSM 15171 / DSS-3) (Silicibacter pomeroyi), this protein is Phosphoglycerate kinase.